The chain runs to 38 residues: Trypsin inhibitor DE5 beta chain (38 aa).

It belongs to the protease inhibitor I3 (leguminous Kunitz-type inhibitor) family. Heterodimer of an alpha and a beta chain linked by a disulfide bond.

Its function is as follows. Inhibition of trypsin. This Adenanthera pavonina (Sandal bead tree) protein is Trypsin inhibitor DE5 beta chain.